A 354-amino-acid chain; its full sequence is NADH-quinone oxidoreductase subunit H 2 (354 aa).

8 consecutive transmembrane segments (helical) span residues 4 to 24 (IALFLLVALIKVVLVIFVLLT), 81 to 101 (ILAPMLAVAMALLSISIVPFG), 130 to 150 (IGLLIILGVTSIGVYGIALAG), 170 to 190 (VSYEVSLGLSLVGVLLLSGSF), 201 to 221 (GGFWNWNIFGGFQFIAFFIYL), 269 to 289 (VACIASILFLGGWSGPVPGFL), 296 to 316 (LVPVFWFCLRIFAFLFIYIWV), and 333 to 353 (WKFLLPLSIANIMVTALFVAL).

It belongs to the complex I subunit 1 family. NDH-1 is composed of 14 different subunits. Subunits NuoA, H, J, K, L, M, N constitute the membrane sector of the complex.

It localises to the cell inner membrane. The enzyme catalyses a quinone + NADH + 5 H(+)(in) = a quinol + NAD(+) + 4 H(+)(out). Functionally, NDH-1 shuttles electrons from NADH, via FMN and iron-sulfur (Fe-S) centers, to quinones in the respiratory chain. The immediate electron acceptor for the enzyme in this species is believed to be ubiquinone. Couples the redox reaction to proton translocation (for every two electrons transferred, four hydrogen ions are translocated across the cytoplasmic membrane), and thus conserves the redox energy in a proton gradient. This subunit may bind ubiquinone. The polypeptide is NADH-quinone oxidoreductase subunit H 2 (Koribacter versatilis (strain Ellin345)).